The sequence spans 139 residues: Putative pre-16S rRNA nuclease (139 aa).

Belongs to the YqgF nuclease family.

It is found in the cytoplasm. Functionally, could be a nuclease involved in processing of the 5'-end of pre-16S rRNA. The sequence is that of Putative pre-16S rRNA nuclease from Streptococcus pneumoniae (strain JJA).